The primary structure comprises 279 residues: Proto-oncogene FRAT1 (279 aa).

Disordered regions lie at residues 1-24 and 56-76; these read MPCRREEEEEAGEEAEGEEEEEDS and AQHSPASPCGPPGAPLRAPGP. Residues 7–24 are compositionally biased toward acidic residues; it reads EEEEAGEEAEGEEEEEDS. Ser-88 carries the phosphoserine modification. Disordered stretches follow at residues 136–200 and 228–279; these read GPSA…DDPH and RAKL…VPGS. The involved in GSK-3 binding stretch occupies residues 198–220; that stretch reads DPHRLLQQLVLSGNLIKEAVRRL. A phosphoserine mark is found at Ser-249 and Ser-252.

Belongs to the GSK-3-binding protein family. Binds DVL1. Binds GSK-3 and prevent GSK-3-dependent phosphorylation. In terms of processing, phosphorylated.

It is found in the cytoplasm. Its function is as follows. Positively regulates the Wnt signaling pathway by stabilizing beta-catenin through the association with GSK-3. May play a role in tumor progression and collaborate with PIM1 and MYC in lymphomagenesis. This is Proto-oncogene FRAT1 (FRAT1) from Homo sapiens (Human).